Reading from the N-terminus, the 636-residue chain is PTS system beta-glucoside-specific EIIBCA component (636 aa).

Residues 1-86 (MKYEQLAKDI…VEIGGFQNQA (86 aa)) enclose the PTS EIIB type-1 domain. Residue C26 is the Phosphocysteine intermediate; for EIIB activity of the active site. A run of 10 helical transmembrane segments spans residues 104–124 (IDII…TGMI), 146–166 (LLHA…GYTA), 172–192 (ATPF…LVVL), 215–235 (FLGI…IILA), 258–278 (LVPF…IGPI), 299–319 (IIAG…GLHW), 337–357 (VLAM…AVWL), 369–389 (VPAF…GVTL), 407–427 (AIIG…IFGI), and 444–464 (IVIA…LFGL). A PTS EIIC type-1 domain is found at 105–476 (DIIASIFTPV…GNASDEQTET (372 aa)). Positions 472–492 (EQTETKAHTSTGTGEKEEISS) are disordered. In terms of domain architecture, PTS EIIA type-1 spans 506 to 610 (DEAFSSGALG…AVTTPVIVTN (105 aa)). H558 (tele-phosphohistidine intermediate; for EIIA activity) is an active-site residue.

It localises to the cell membrane. Its function is as follows. The phosphoenolpyruvate-dependent sugar phosphotransferase system (sugar PTS), a major carbohydrate active -transport system, catalyzes the phosphorylation of incoming sugar substrates concomitantly with their translocation across the cell membrane. This system is involved in beta-glucoside transport. The sequence is that of PTS system beta-glucoside-specific EIIBCA component (bglP) from Halalkalibacterium halodurans (strain ATCC BAA-125 / DSM 18197 / FERM 7344 / JCM 9153 / C-125) (Bacillus halodurans).